The sequence spans 86 residues: Putative membrane protein insertion efficiency factor (86 aa).

This sequence belongs to the UPF0161 family.

The protein localises to the cell inner membrane. Its function is as follows. Could be involved in insertion of integral membrane proteins into the membrane. This is Putative membrane protein insertion efficiency factor from Oleidesulfovibrio alaskensis (strain ATCC BAA-1058 / DSM 17464 / G20) (Desulfovibrio alaskensis).